The following is a 366-amino-acid chain: Methylthioribose-1-phosphate isomerase (366 aa).

The active-site Proton donor is the Asp-260.

It belongs to the eIF-2B alpha/beta/delta subunits family. MtnA subfamily.

The protein resides in the cytoplasm. The protein localises to the nucleus. It catalyses the reaction 5-(methylsulfanyl)-alpha-D-ribose 1-phosphate = 5-(methylsulfanyl)-D-ribulose 1-phosphate. The protein operates within amino-acid biosynthesis; L-methionine biosynthesis via salvage pathway; L-methionine from S-methyl-5-thio-alpha-D-ribose 1-phosphate: step 1/6. In terms of biological role, catalyzes the interconversion of methylthioribose-1-phosphate (MTR-1-P) into methylthioribulose-1-phosphate (MTRu-1-P). This is Methylthioribose-1-phosphate isomerase from Caenorhabditis elegans.